The chain runs to 152 residues: Ribosome maturation factor RimP (152 aa).

Belongs to the RimP family.

It localises to the cytoplasm. In terms of biological role, required for maturation of 30S ribosomal subunits. This is Ribosome maturation factor RimP from Burkholderia multivorans (strain ATCC 17616 / 249).